A 466-amino-acid chain; its full sequence is ATP synthase subunit beta (466 aa).

156–163 (GGAGVGKT) contributes to the ATP binding site.

This sequence belongs to the ATPase alpha/beta chains family. In terms of assembly, F-type ATPases have 2 components, CF(1) - the catalytic core - and CF(0) - the membrane proton channel. CF(1) has five subunits: alpha(3), beta(3), gamma(1), delta(1), epsilon(1). CF(0) has three main subunits: a(1), b(2) and c(9-12). The alpha and beta chains form an alternating ring which encloses part of the gamma chain. CF(1) is attached to CF(0) by a central stalk formed by the gamma and epsilon chains, while a peripheral stalk is formed by the delta and b chains.

It is found in the cell inner membrane. It carries out the reaction ATP + H2O + 4 H(+)(in) = ADP + phosphate + 5 H(+)(out). Produces ATP from ADP in the presence of a proton gradient across the membrane. The catalytic sites are hosted primarily by the beta subunits. The sequence is that of ATP synthase subunit beta from Polynucleobacter necessarius subsp. necessarius (strain STIR1).